The chain runs to 220 residues: Probable septum site-determining protein MinC (220 aa).

Belongs to the MinC family. Interacts with MinD and FtsZ.

Functionally, cell division inhibitor that blocks the formation of polar Z ring septums. Rapidly oscillates between the poles of the cell to destabilize FtsZ filaments that have formed before they mature into polar Z rings. Prevents FtsZ polymerization. The chain is Probable septum site-determining protein MinC from Vibrio atlanticus (strain LGP32) (Vibrio splendidus (strain Mel32)).